The primary structure comprises 285 residues: N(G),N(G)-dimethylarginine dimethylaminohydrolase 1 (285 aa).

At alanine 2 the chain carries N-acetylalanine. Substrate is bound by residues leucine 30, aspartate 73, glutamate 78, aspartate 79, arginine 98, and arginine 145. Histidine 173 functions as the Proton donor in the catalytic mechanism. An S-nitrosocysteine modification is found at cysteine 222. Valine 268 is a binding site for substrate. Cysteine 274 carries the post-translational modification S-nitrosocysteine. Cysteine 274 acts as the Nucleophile in catalysis. A Zn(2+)-binding site is contributed by cysteine 274.

In terms of assembly, monomer. In terms of tissue distribution, widely distributed, highest concentrations found in brain, brain cortex and kidney (at protein level).

It catalyses the reaction N(omega),N(omega)-dimethyl-L-arginine + H2O = dimethylamine + L-citrulline. The catalysed reaction is N(omega)-methyl-L-arginine + H2O = L-citrulline + methylamine. Its activity is regulated as follows. Copurifies with a tightly bound zinc ion. Activated by release of zinc. His and other agents that promote the release of bound zinc ions activate the enzyme (in vitro). Inhibited by S-nitrosylation. Zinc protects the protein against S-nitrosylation. Its function is as follows. Hydrolyzes N(G),N(G)-dimethyl-L-arginine (ADMA) and N(G)-monomethyl-L-arginine (MMA) which act as inhibitors of NOS. Has therefore a role in the regulation of nitric oxide generation. This chain is N(G),N(G)-dimethylarginine dimethylaminohydrolase 1 (DDAH1), found in Bos taurus (Bovine).